The sequence spans 209 residues: Large ribosomal subunit protein uL3 (209 aa).

A disordered region spans residues 133 to 153; that stretch reads THGNSLSHRVPGSIGQNQTPG. The residue at position 150 (Q150) is an N5-methylglutamine.

It belongs to the universal ribosomal protein uL3 family. In terms of assembly, part of the 50S ribosomal subunit. Forms a cluster with proteins L14 and L19. Post-translationally, methylated by PrmB.

In terms of biological role, one of the primary rRNA binding proteins, it binds directly near the 3'-end of the 23S rRNA, where it nucleates assembly of the 50S subunit. This is Large ribosomal subunit protein uL3 from Pectobacterium carotovorum subsp. carotovorum (strain PC1).